A 242-amino-acid chain; its full sequence is Small ribosomal subunit protein uS2 (242 aa).

The protein belongs to the universal ribosomal protein uS2 family.

The sequence is that of Small ribosomal subunit protein uS2 from Vibrio parahaemolyticus serotype O3:K6 (strain RIMD 2210633).